The following is a 147-amino-acid chain: Microsomal glutathione S-transferase 2 (147 aa).

The next 3 helical transmembrane spans lie at 6 to 26 (ILLAAVSILSACQQSYFALQV), 59 to 79 (FYPIFIITLWMAGWYFNQVFA), and 111 to 131 (SLGILALLTLLGALGIANSFL).

Belongs to the MAPEG family. As to quaternary structure, homotrimer. As to expression, liver, spleen, skeletal muscle, heart, adrenals, pancreas, prostate, testis, fetal liver, and fetal spleen. Very low expression in lung, brain, placenta and bone marrow. Abundantly expressed in human umbilical vein endothelial cells (at protein level).

It localises to the endoplasmic reticulum membrane. The protein resides in the microsome membrane. The catalysed reaction is RX + glutathione = an S-substituted glutathione + a halide anion + H(+). It catalyses the reaction 1-chloro-2,4-dinitrobenzene + glutathione = 2,4-dinitrophenyl-S-glutathione + chloride + H(+). It carries out the reaction leukotriene C4 = leukotriene A4 + glutathione. The enzyme catalyses (5S)-hydroperoxy-(6E,8Z,11Z,14Z)-eicosatetraenoate + 2 glutathione = (5S)-hydroxy-(6E,8Z,11Z,14Z)-eicosatetraenoate + glutathione disulfide + H2O. Each monomer can bind on GSH molecule but only one subunit is catalytically active. In terms of biological role, catalyzes several different glutathione-dependent reactions. Catalyzes the glutathione-dependent reduction of lipid hydroperoxides, such as 5-HPETE. Has glutathione transferase activity, toward xenobiotic electrophiles, such as 1-chloro-2, 4-dinitrobenzene (CDNB). Also catalyzes the conjugation of leukotriene A4 with reduced glutathione to form leukotriene C4 (LTC4). Involved in oxidative DNA damage induced by ER stress and anticancer agents by activating LTC4 biosynthetic machinery in nonimmune cells. The chain is Microsomal glutathione S-transferase 2 (MGST2) from Homo sapiens (Human).